Reading from the N-terminus, the 201-residue chain is Probable nicotinate-nucleotide adenylyltransferase (201 aa).

This sequence belongs to the NadD family.

The enzyme catalyses nicotinate beta-D-ribonucleotide + ATP + H(+) = deamido-NAD(+) + diphosphate. Its pathway is cofactor biosynthesis; NAD(+) biosynthesis; deamido-NAD(+) from nicotinate D-ribonucleotide: step 1/1. Functionally, catalyzes the reversible adenylation of nicotinate mononucleotide (NaMN) to nicotinic acid adenine dinucleotide (NaAD). This is Probable nicotinate-nucleotide adenylyltransferase from Clostridium botulinum (strain ATCC 19397 / Type A).